We begin with the raw amino-acid sequence, 291 residues long: Inactive dihydropteroate synthase 2 (291 aa).

The Pterin-binding domain maps to 15–272; sequence QLIMAIVNRT…EVVATRRVLE (258 aa).

The protein belongs to the DHPS family. As to quaternary structure, homodimer.

Its function is as follows. Has very low affinity for the DHPS substrate 6-hydroxymethyl-7,8-dihydropterin-pyrophosphate, but can bind the inhibitor dapsone. Seems to lack dihydropteroate synthase activity, and does probably not function in folate metabolism. In Mycobacterium leprae (strain TN), this protein is Inactive dihydropteroate synthase 2 (folP2).